Reading from the N-terminus, the 632-residue chain is tRNA uridine 5-carboxymethylaminomethyl modification enzyme MnmG (632 aa).

FAD contacts are provided by residues 15 to 20, Ile127, and Ser182; that span reads GAGHAG. 276–290 is a binding site for NAD(+); it reads GPRYCPSIEDKIVRF. Gln373 lines the FAD pocket.

It belongs to the MnmG family. In terms of assembly, homodimer. Heterotetramer of two MnmE and two MnmG subunits. Requires FAD as cofactor.

It localises to the cytoplasm. Functionally, NAD-binding protein involved in the addition of a carboxymethylaminomethyl (cmnm) group at the wobble position (U34) of certain tRNAs, forming tRNA-cmnm(5)s(2)U34. This Streptococcus pyogenes serotype M18 (strain MGAS8232) protein is tRNA uridine 5-carboxymethylaminomethyl modification enzyme MnmG.